A 201-amino-acid polypeptide reads, in one-letter code: Small ribosomal subunit protein uS4 (201 aa).

The interval 26–45 (FEKRNYPPGQHGNNRRRGKK) is disordered. The S4 RNA-binding domain occupies 93–153 (SRLDNVVYRM…EKSKSLAVVQ (61 aa)).

This sequence belongs to the universal ribosomal protein uS4 family. As to quaternary structure, part of the 30S ribosomal subunit. Contacts protein S5. The interaction surface between S4 and S5 is involved in control of translational fidelity.

Its function is as follows. One of the primary rRNA binding proteins, it binds directly to 16S rRNA where it nucleates assembly of the body of the 30S subunit. In terms of biological role, with S5 and S12 plays an important role in translational accuracy. In Christiangramia forsetii (strain DSM 17595 / CGMCC 1.15422 / KT0803) (Gramella forsetii), this protein is Small ribosomal subunit protein uS4.